Consider the following 744-residue polypeptide: Polyribonucleotide nucleotidyltransferase (744 aa).

2 residues coordinate Mg(2+): aspartate 515 and aspartate 521. Positions 581 to 640 constitute a KH domain; the sequence is PRVITVQVPVDKIGEVIGPKGKMINQIQDDTGADISIEDDGTVFIGATDGPSAEAARQAI. The 73-residue stretch at 652–724 folds into the S1 motif domain; that stretch reads GERFVGTVVK…PRGKLSLHAV (73 aa).

This sequence belongs to the polyribonucleotide nucleotidyltransferase family. It depends on Mg(2+) as a cofactor.

It is found in the cytoplasm. The catalysed reaction is RNA(n+1) + phosphate = RNA(n) + a ribonucleoside 5'-diphosphate. Involved in mRNA degradation. Catalyzes the phosphorolysis of single-stranded polyribonucleotides processively in the 3'- to 5'-direction. This Beutenbergia cavernae (strain ATCC BAA-8 / DSM 12333 / CCUG 43141 / JCM 11478 / NBRC 16432 / NCIMB 13614 / HKI 0122) protein is Polyribonucleotide nucleotidyltransferase.